The primary structure comprises 498 residues: MDTITVVENVFGEVERKVQKSYWEEHSKDLTVESMMLDSRAKDLDKEERPEVLAILPSYAGKTVLELGAGIGRFTGELAKEAGHVIALDFIDSVIKKNEEINGDIYKNITFMCADVTSPELKIEDNSVDIVFSNWLLMYLNDEEVEKLIGRIVKWLKPGGHIFIRESCFHQSGDSKRKVNPTHYREPRFYTKVFKECHSYDQEGNSFELSLVTSKCIGAYVKSKKNQNQICWLWEKVKCTEDKGFQRFLDNVQYKSTGILRYERVFGEGYVSTGGFETTKEFVDKLDLKAGQKVLDVGCGIGGGDFYMAETYDVHVLGIDLSINMVSFAIERAIGRSCSVEFEVADCTTKEYAENTFDVIYSRDTILHIQDKPALFRNFFKWLKPGGKVLISDYCRSPGTPSEEFAAYIKQRGYDLHDVKTYGKMLEDAGFHDVVAEDRTDQFLRVLERELGETEKNKEAFLADFTQEDYDDIVNGWSAKLKRSSAGEQKWGLFIATK.

S-adenosyl-L-homocysteine contacts are provided by Gly-68, Arg-73, Asp-89, Asp-115, Val-116, and Asn-134. Phosphocholine is bound by residues Ser-167, Ser-172, Gly-173, Arg-177, and Tyr-184. N-methylethanolamine phosphate contacts are provided by residues 253–254 (QY) and Tyr-262. Tyr-262 contributes to the phosphocholine binding site. 7 residues coordinate S-adenosyl-L-homocysteine: Val-271, Ser-272, Gly-298, Asp-320, Asp-346, Cys-347, and Arg-363. 5 residues coordinate phosphocholine: Tyr-394, Tyr-408, Arg-412, Tyr-414, and Lys-480. Residues Tyr-394, Tyr-408, 412-414 (RGY), and Lys-480 each bind N-methylethanolamine phosphate.

This sequence belongs to the class I-like SAM-binding methyltransferase superfamily. PEAMT family.

It carries out the reaction phosphoethanolamine + S-adenosyl-L-methionine = N-methylethanolamine phosphate + S-adenosyl-L-homocysteine + H(+). It catalyses the reaction N-methylethanolamine phosphate + S-adenosyl-L-methionine = N,N-dimethylethanolamine phosphate + S-adenosyl-L-homocysteine + H(+). The enzyme catalyses N,N-dimethylethanolamine phosphate + S-adenosyl-L-methionine = phosphocholine + S-adenosyl-L-homocysteine + H(+). It participates in phospholipid metabolism; phosphatidylcholine biosynthesis; phosphocholine from phosphoethanolamine: step 1/1. Inhibited by phosphatidic acid. Its function is as follows. Involved in phosphocholine biosynthesis. Catalyzes the N-methylation of phosphoethanolamine, phosphomonomethylethanolamine and phosphodimethylethanolamine, the three methylation steps required to convert phosphoethanolamine to phosphocholine (PC). This Triticum aestivum (Wheat) protein is Phosphoethanolamine N-methyltransferase 1.